Reading from the N-terminus, the 488-residue chain is Glutamyl-tRNA(Gln) amidotransferase subunit B, mitochondrial (488 aa).

This sequence belongs to the GatB/GatE family. GatB subfamily. As to quaternary structure, subunit of the heterotrimeric GatFAB amidotransferase (AdT) complex, composed of A, B and F subunits.

It is found in the mitochondrion. It catalyses the reaction L-glutamyl-tRNA(Gln) + L-glutamine + ATP + H2O = L-glutaminyl-tRNA(Gln) + L-glutamate + ADP + phosphate + H(+). Functionally, allows the formation of correctly charged Gln-tRNA(Gln) through the transamidation of misacylated Glu-tRNA(Gln) in the mitochondria. The reaction takes place in the presence of glutamine and ATP through an activated gamma-phospho-Glu-tRNA(Gln). The protein is Glutamyl-tRNA(Gln) amidotransferase subunit B, mitochondrial of Candida albicans (strain SC5314 / ATCC MYA-2876) (Yeast).